The following is a 113-amino-acid chain: Large ribosomal subunit protein uL22 (113 aa).

The protein belongs to the universal ribosomal protein uL22 family. Part of the 50S ribosomal subunit.

Functionally, this protein binds specifically to 23S rRNA; its binding is stimulated by other ribosomal proteins, e.g. L4, L17, and L20. It is important during the early stages of 50S assembly. It makes multiple contacts with different domains of the 23S rRNA in the assembled 50S subunit and ribosome. In terms of biological role, the globular domain of the protein is located near the polypeptide exit tunnel on the outside of the subunit, while an extended beta-hairpin is found that lines the wall of the exit tunnel in the center of the 70S ribosome. The sequence is that of Large ribosomal subunit protein uL22 from Oceanobacillus iheyensis (strain DSM 14371 / CIP 107618 / JCM 11309 / KCTC 3954 / HTE831).